We begin with the raw amino-acid sequence, 132 residues long: Protein FAM174C (132 aa).

The N-terminal stretch at 1–26 (MGPRVLQPPLLLLLLALLLAALPCGA) is a signal peptide. The disordered stretch occupies residues 34 to 66 (PAQVTLSPPPAVTNGSQPGAPHNSTHTRPPGAS). The span at 46-60 (TNGSQPGAPHNSTHT) shows a compositional bias: polar residues. An N-linked (GlcNAc...) asparagine glycan is attached at N47. The chain crosses the membrane as a helical span at residues 73-93 (SFYVILGFCGLTALYFLIRAF). Residue T113 is modified to Phosphothreonine. The disordered stretch occupies residues 113-132 (TEMASLDSDEETVFESRNLR). Residues S117 and S120 each carry the phosphoserine modification.

The protein belongs to the FAM174 family.

It is found in the membrane. This is Protein FAM174C from Homo sapiens (Human).